Here is a 436-residue protein sequence, read N- to C-terminus: Aminotransferase tdiD (436 aa).

The substrate site is built by Arg30, Tyr86, Tyr148, and Asn202. Lys270 bears the N6-(pyridoxal phosphate)lysine mark. Arg407 contributes to the substrate binding site.

The protein belongs to the class-I pyridoxal-phosphate-dependent aminotransferase family. It depends on pyridoxal 5'-phosphate as a cofactor.

It catalyses the reaction 3-phenylpyruvate + L-tryptophan = indole-3-pyruvate + L-phenylalanine. It participates in secondary metabolite biosynthesis. Its function is as follows. Aminotransferase; part of the gene cluster that mediates the biosynthesis of terrequinone A, an antitumor agent. The first step in the biosynthetic pathway for terrequinone A is formation of indole pyruvic acid (IPA) from L-tryptophan by the aminotransferase tdiD. The nonribosomal peptide synthase tdiA then immediately converts unstable IPA to didemethylasterriquinone D (DDAQ D), via condensation of 2 IPA molecules. The symmetric connectivity of the 2 IPA molecules is thought to arise by head-to-tail dual Claisen condensations facilitated by the TE domain. TdiB then catalyzes reverse prenylation by transferring dimethylallyl diphosphate to carbon atom 2' of DDAQ D, to yield asterriquinone C-1. Finally, tdiC and tdiE enzymes robustly convert asterriquinone C-1 to terrequinone A via a transformation involving regular prenylation at carbon atom 5, which requires elimination of the hydroxy group on C-5. In Emericella nidulans (strain FGSC A4 / ATCC 38163 / CBS 112.46 / NRRL 194 / M139) (Aspergillus nidulans), this protein is Aminotransferase tdiD.